The primary structure comprises 1036 residues: Ephrin type-A receptor 6 (1036 aa).

The first 22 residues, 1–22, serve as a signal peptide directing secretion; it reads MGGCEVREFLLQFGFFLPLLTA. The Extracellular segment spans residues 23-550; sequence WPGDCSHVSN…MAAEQGQILV (528 aa). One can recognise an Eph LBD domain in the interval 34 to 212; sequence QVVLLDTTTV…FYKKCPFTVR (179 aa). 2 consecutive Fibronectin type-III domains span residues 331 to 441 and 442 to 537; these read PPSA…TDQD and APSL…TGDE. N-linked (GlcNAc...) asparagine glycans are attached at residues Asn-343, Asn-397, and Asn-410. A helical transmembrane segment spans residues 551 to 571; sequence IATAAVGGFTLLVILTLFFLI. Over 572–1036 the chain is Cytoplasmic; sequence TGRCQWYIKA…MHIQEKGFHV (465 aa). Phosphotyrosine; by autocatalysis is present on residues Tyr-606 and Tyr-612. Positions 631 to 944 constitute a Protein kinase domain; sequence IRIERVIGAG…RNPSALHTLV (314 aa). ATP is bound by residues 637–645 and Lys-663; that span reads IGAGEFGEV. The Proton acceptor role is filled by Asp-798. Phosphotyrosine; by autocatalysis occurs at positions 831 and 978. Residues 961 to 1025 enclose the SAM domain; that stretch reads PLFVTVGDWL…VSSIQTLRLH (65 aa). The PDZ-binding motif lies at 1034-1036; it reads FHV.

Belongs to the protein kinase superfamily. Tyr protein kinase family. Ephrin receptor subfamily. In terms of assembly, heterotetramer upon binding of the ligand. The heterotetramer is composed of an ephrin dimer and a receptor dimer. Oligomerization is probably required to induce biological responses. Interacts (via SAM domain) with ANKS1A (via SAM domain). Expressed in brain and testis.

It is found in the membrane. It carries out the reaction L-tyrosyl-[protein] + ATP = O-phospho-L-tyrosyl-[protein] + ADP + H(+). In terms of biological role, receptor tyrosine kinase which binds promiscuously GPI-anchored ephrin-A family ligands residing on adjacent cells, leading to contact-dependent bidirectional signaling into neighboring cells. The signaling pathway downstream of the receptor is referred to as forward signaling while the signaling pathway downstream of the ephrin ligand is referred to as reverse signaling. The polypeptide is Ephrin type-A receptor 6 (EPHA6) (Homo sapiens (Human)).